A 409-amino-acid polypeptide reads, in one-letter code: F-box/kelch-repeat protein At2g44130 (409 aa).

Residues His-17–Arg-63 form the F-box domain. Kelch repeat units follow at residues Lys-98–Asp-148, Lys-151–Pro-199, Lys-201–Met-248, and Arg-251–Gly-300.

This chain is F-box/kelch-repeat protein At2g44130, found in Arabidopsis thaliana (Mouse-ear cress).